The sequence spans 339 residues: Transcription initiation factor IIB (339 aa).

A TFIIB-type zinc finger spans residues 39 to 70; that stretch reads EELICPVCGSKSIIKDYERAEIVCEMCGCVLQ. Zn(2+)-binding residues include Cys-43, Cys-46, Cys-62, and Cys-65. 2 consecutive repeat copies span residues 156–239 and 250–331.

It belongs to the TFIIB family.

Functionally, stabilizes TBP binding to an archaeal box-A promoter. Also responsible for recruiting RNA polymerase II to the pre-initiation complex (DNA-TBP-TFIIB). The protein is Transcription initiation factor IIB of Methanococcus maripaludis (strain DSM 14266 / JCM 13030 / NBRC 101832 / S2 / LL).